The sequence spans 191 residues: Cell number regulator 1 (191 aa).

Residues 13–44 (FSAGAPPTAPPPPAAYHQQQQQHGANMDTSRP) are disordered. A compositionally biased stretch (low complexity) spans 27-37 (AYHQQQQQHGA). The chain crosses the membrane as a helical span at residues 91 to 113 (IASGLVYGLICASTGMGCLYSCL).

It belongs to the cornifelin family. As to expression, expressed in roots, coleoptiles, stalks and silks. Detected in leaves, apical meristems, immature ears and pericarps. Highest expression in coleoptiles and silks.

It localises to the membrane. Its function is as follows. Acts as a negative regulator of cell number. This Zea mays (Maize) protein is Cell number regulator 1 (CNR1).